A 442-amino-acid chain; its full sequence is MSSSSDTHAGESRHRRNPIRWLLGFGFFVQGFRGFPWLGANFFLTEQLRVNPSVLQLLQNSANLPMVAKPIYGVVSDSVYFFGQHRIPYIAVGALLQAISWLAIAFLSRSNVSILALSIYLLLSNLGASLVEVANDAIVAESGKQKTSETQSGELPSFVWMVSSLGGILGNLLGGIAIKTFSAQSTFLVFGILALLQFLVTINIREKSLNLPENPSPAGGIRKHLSDLSHVLRKPEISYSIAWIAVSTAVVPVLTGTMFFYQTKFLKIDASLLGISKVFGQIAMLLWGFAYNRWLKAMRPRKLLTAIQVTIAFFVISDLLFVKGVYRDLGVSDSVYVLFFSGFLETLFYFKILPFTVLMARLCPPGCEGSLMAFVMSAIALAFIVSGYLGIVLASFVGVTEDDFSGFTRGLAIEACCVGIPLILTSWIYDEAETKEKSKKIE.

The next 12 membrane-spanning stretches (helical) occupy residues 23–43 (LGFG…ANFF), 64–82 (LPMV…VYFF), 87–107 (IPYI…IAFL), 114–134 (ILAL…VEVA), 158–178 (FVWM…GIAI), 184–204 (QSTF…TINI), 241–261 (IAWI…MFFY), 270–290 (ASLL…WGFA), 302–322 (KLLT…LLFV), 335–355 (VYVL…ILPF), 379–399 (IALA…FVGV), and 410–430 (GLAI…WIYD).

Belongs to the major facilitator superfamily. Folate-biopterin transporter (TC 2.A.71) family.

The protein localises to the membrane. Its function is as follows. Could mediate folate transport. This Arabidopsis thaliana (Mouse-ear cress) protein is Probable folate-biopterin transporter 7.